Consider the following 377-residue polypeptide: Nitric oxide reductase FlRd-NAD(+) reductase (377 aa).

The protein belongs to the FAD-dependent oxidoreductase family. The cofactor is FAD.

The protein localises to the cytoplasm. The catalysed reaction is 2 reduced [nitric oxide reductase rubredoxin domain] + NAD(+) + H(+) = 2 oxidized [nitric oxide reductase rubredoxin domain] + NADH. It participates in nitrogen metabolism; nitric oxide reduction. In terms of biological role, one of at least two accessory proteins for anaerobic nitric oxide (NO) reductase. Reduces the rubredoxin moiety of NO reductase. This chain is Nitric oxide reductase FlRd-NAD(+) reductase, found in Escherichia coli O9:H4 (strain HS).